The primary structure comprises 207 residues: Guanylate kinase (207 aa).

In terms of domain architecture, Guanylate kinase-like spans 4–184; the sequence is GTLYIVSAPS…ALSDLKTIIR (181 aa). 11-18 is an ATP binding site; it reads APSGAGKS.

This sequence belongs to the guanylate kinase family.

The protein resides in the cytoplasm. It carries out the reaction GMP + ATP = GDP + ADP. Its function is as follows. Essential for recycling GMP and indirectly, cGMP. This Salmonella typhimurium (strain LT2 / SGSC1412 / ATCC 700720) protein is Guanylate kinase (gmk).